The sequence spans 78 residues: Large ribosomal subunit protein bL28 (78 aa).

Residues 1–21 are disordered; that stretch reads MARVCQVTGKGPMTGNNVSHA.

Belongs to the bacterial ribosomal protein bL28 family.

The polypeptide is Large ribosomal subunit protein bL28 (Bordetella petrii (strain ATCC BAA-461 / DSM 12804 / CCUG 43448)).